We begin with the raw amino-acid sequence, 532 residues long: Hepatocyte nuclear factor 1-beta-B (532 aa).

Residues 1 to 35 (MFTDMVSKLTSLQQELLSALLDSGVTKDVLVQALE) are dimerization. The HNF-p1 domain occupies 5–36 (MVSKLTSLQQELLSALLDSGVTKDVLVQALED). Residues 74–95 (TGAQGKGGKLSGDEGSEDGDDF) form a disordered region. In terms of domain architecture, POU-specific atypical spans 102-197 (RELQSLNTEE…IDRQFDRVQG (96 aa)). Gly residues predominate over residues 222–231 (SSGAAGGSGA). Disordered stretches follow at residues 222 to 245 (SSGA…KRMR) and 500 to 532 (EAGQ…LQAW). Positions 244-324 (MRRNRFKWGP…NRRKEEAFRQ (81 aa)) form a DNA-binding region, homeobox; HNF1-type. Polar residues predominate over residues 505 to 532 (SHPSRYSTMDSSTITHLGSSKQCPLQAW).

The protein belongs to the HNF1 homeobox family. As to quaternary structure, binds DNA as a dimer. Can form homodimer or heterodimer with HNF1-alpha. As to expression, first expressed at stage 10 in the intermediate mesoderm. Expressed in rhombomere r5 by 14 hpf with expression diminishing by 18 hpf.

Its subcellular location is the nucleus. In terms of biological role, transcription factor that binds to the inverted palindrome 5'-GTTAATNATTAAC-3'. Acts downstream of hnf1ba but is not required for induction of rhombomere r5/r6 gene expression in the hindbrain. The polypeptide is Hepatocyte nuclear factor 1-beta-B (Danio rerio (Zebrafish)).